The primary structure comprises 175 residues: Crossover junction endodeoxyribonuclease RuvC (175 aa).

Catalysis depends on residues D16, E76, and D148. 3 residues coordinate Mg(2+): D16, E76, and D148.

This sequence belongs to the RuvC family. Homodimer which binds Holliday junction (HJ) DNA. The HJ becomes 2-fold symmetrical on binding to RuvC with unstacked arms; it has a different conformation from HJ DNA in complex with RuvA. In the full resolvosome a probable DNA-RuvA(4)-RuvB(12)-RuvC(2) complex forms which resolves the HJ. The cofactor is Mg(2+).

Its subcellular location is the cytoplasm. The enzyme catalyses Endonucleolytic cleavage at a junction such as a reciprocal single-stranded crossover between two homologous DNA duplexes (Holliday junction).. In terms of biological role, the RuvA-RuvB-RuvC complex processes Holliday junction (HJ) DNA during genetic recombination and DNA repair. Endonuclease that resolves HJ intermediates. Cleaves cruciform DNA by making single-stranded nicks across the HJ at symmetrical positions within the homologous arms, yielding a 5'-phosphate and a 3'-hydroxyl group; requires a central core of homology in the junction. The consensus cleavage sequence is 5'-(A/T)TT(C/G)-3'. Cleavage occurs on the 3'-side of the TT dinucleotide at the point of strand exchange. HJ branch migration catalyzed by RuvA-RuvB allows RuvC to scan DNA until it finds its consensus sequence, where it cleaves and resolves the cruciform DNA. This chain is Crossover junction endodeoxyribonuclease RuvC, found in Bradyrhizobium sp. (strain ORS 278).